The chain runs to 304 residues: Dihydroorotate dehydrogenase B (NAD(+)), catalytic subunit (304 aa).

FMN contacts are provided by residues Ser-21 and 45–46 (KA). Substrate contacts are provided by residues Lys-45 and 69 to 73 (NAIGL). Positions 99 and 127 each coordinate FMN. Residue Asn-127 participates in substrate binding. The active-site Nucleophile is the Cys-130. FMN is bound by residues Lys-165 and Ile-191. 192–193 (NT) contacts substrate. FMN is bound by residues Gly-217, 243 to 244 (GG), and 265 to 266 (GT).

The protein belongs to the dihydroorotate dehydrogenase family. Type 1 subfamily. Heterotetramer of 2 PyrK and 2 PyrD type B subunits. Requires FMN as cofactor.

It is found in the cytoplasm. It catalyses the reaction (S)-dihydroorotate + NAD(+) = orotate + NADH + H(+). It participates in pyrimidine metabolism; UMP biosynthesis via de novo pathway; orotate from (S)-dihydroorotate (NAD(+) route): step 1/1. In terms of biological role, catalyzes the conversion of dihydroorotate to orotate with NAD(+) as electron acceptor. The sequence is that of Dihydroorotate dehydrogenase B (NAD(+)), catalytic subunit (pyrD) from Shouchella clausii (strain KSM-K16) (Alkalihalobacillus clausii).